The primary structure comprises 425 residues: Tumor necrosis factor receptor superfamily member 16 (425 aa).

The first 29 residues, Met-1–Ala-29, serve as a signal peptide directing secretion. Over Lys-30–Ile-253 the chain is Extracellular. TNFR-Cys repeat units follow at residues Thr-32 to Cys-65, Pro-67 to Cys-108, Arg-109 to Cys-147, and Glu-149 to Cys-189. 12 disulfide bridges follow: Cys-33-Cys-44, Cys-45-Cys-58, Cys-48-Cys-65, Cys-68-Cys-84, Cys-87-Cys-100, Cys-90-Cys-108, Cys-110-Cys-123, Cys-126-Cys-139, Cys-129-Cys-147, Cys-150-Cys-165, Cys-168-Cys-181, and Cys-171-Cys-189. 2 N-linked (GlcNAc...) asparagine glycosylation sites follow: Asn-61 and Asn-71. The segment at Pro-193 to Val-225 is disordered. Positions Ser-206–Glu-215 are enriched in polar residues. The chain crosses the membrane as a helical span at residues Pro-254–Lys-274. Over Arg-275–Val-425 the chain is Cytoplasmic. Composition is skewed to polar residues over residues Asn-282–Asn-292 and Ser-306–Gly-327. Positions Asn-282–Gly-332 are disordered. Residue Ser-312 is modified to Phosphoserine. Positions Gly-327–Leu-342 are mediates interaction with KIDINS220. The Death domain maps to Gly-354–Ser-419.

Homodimer; disulfide-linked. Heterodimer with SORCS2. The extracellular domains of the heterodimer bind NGF. The cytoplasmic region of the heterodimer binds TRIO. NGF binding mediates dissociation of TRIO from the receptor complex. Interacts with RTN4R. Interacts with TRAF2, TRAF4 and TRAF6. Interacts with PTPN13 and RANBP9. Interacts through TRAF6 with SQSTM1 which bridges NGFR to NTRK1. Interacts with BEX1. Interacts with BEX3. Interacts with KIDINS220 and NTRK1. Can form a ternary complex with NTRK1 and KIDINS220 and this complex is affected by the expression levels of KIDINS220. An increase in KIDINS220 expression leads to a decreased association of NGFR and NTRK1. Interacts (via death domain) with RAB31. Interacts with NTRK2; may regulate the ligand specificity of the NTRK2 receptor. Interacts with LINGO1. Interacts with NRADD. Interacts with MAGED1; the interaction antagonizes the association NGFR:NTRK1. Interacts (via death domain) with ARHGDIA and RIPK2. Interacts with BFAR. Subject to intramembrane proteolytic cleavage by the gamma-secretase complex, giving rise to an intracellular fragment that is rapidly degraded via the proteasome. Post-translationally, N- and O-glycosylated. In terms of processing, phosphorylated on serine residues.

Its subcellular location is the cell membrane. The protein resides in the cytoplasm. It localises to the perikaryon. It is found in the cell projection. The protein localises to the growth cone. Its subcellular location is the dendritic spine. In terms of biological role, low affinity receptor which can bind to NGF, BDNF, NTF3, and NTF4. Forms a heterodimeric receptor with SORCS2 that binds the precursor forms of NGF, BDNF and NTF3 with high affinity, and has much lower affinity for mature NGF and BDNF. In response to proNGF binding, the heterodimeric receptor with SORCS2 activates a signaling cascade that leads to decreased Rac activity, reorganization of the actin cytoskeleton and neuronal growth cone collapse. Plays an important role in differentiation and survival of specific neuronal populations during development. Can mediate cell survival as well as cell death of neural cells. Plays a role in the inactivation of RHOA. Plays a role in the regulation of the translocation of GLUT4 to the cell surface in adipocytes and skeletal muscle cells in response to insulin, probably by regulating RAB31 activity, and thereby contributes to the regulation of insulin-dependent glucose uptake. Necessary for the circadian oscillation of the clock genes BMAL1, PER1, PER2 and NR1D1 in the suprachiasmatic nucleus (SCN) of the brain and in liver and of the genes involved in glucose and lipid metabolism in the liver. The protein is Tumor necrosis factor receptor superfamily member 16 (Ngfr) of Rattus norvegicus (Rat).